The sequence spans 348 residues: N-acetyl-gamma-glutamyl-phosphate reductase (348 aa).

Cys149 is an active-site residue.

It belongs to the NAGSA dehydrogenase family. Type 1 subfamily.

It is found in the cytoplasm. It catalyses the reaction N-acetyl-L-glutamate 5-semialdehyde + phosphate + NADP(+) = N-acetyl-L-glutamyl 5-phosphate + NADPH + H(+). Its pathway is amino-acid biosynthesis; L-arginine biosynthesis; N(2)-acetyl-L-ornithine from L-glutamate: step 3/4. Its function is as follows. Catalyzes the NADPH-dependent reduction of N-acetyl-5-glutamyl phosphate to yield N-acetyl-L-glutamate 5-semialdehyde. In Cellvibrio japonicus (strain Ueda107) (Pseudomonas fluorescens subsp. cellulosa), this protein is N-acetyl-gamma-glutamyl-phosphate reductase.